A 1404-amino-acid chain; its full sequence is DNA-directed RNA polymerase subunit beta' (1404 aa).

Residues cysteine 72, cysteine 74, cysteine 87, and cysteine 90 each contribute to the Zn(2+) site. The Mg(2+) site is built by aspartate 462, aspartate 464, and aspartate 466. Zn(2+) contacts are provided by cysteine 816, cysteine 890, cysteine 897, and cysteine 900.

Belongs to the RNA polymerase beta' chain family. The RNAP catalytic core consists of 2 alpha, 1 beta, 1 beta' and 1 omega subunit. When a sigma factor is associated with the core the holoenzyme is formed, which can initiate transcription. The cofactor is Mg(2+). Requires Zn(2+) as cofactor.

The catalysed reaction is RNA(n) + a ribonucleoside 5'-triphosphate = RNA(n+1) + diphosphate. Its function is as follows. DNA-dependent RNA polymerase catalyzes the transcription of DNA into RNA using the four ribonucleoside triphosphates as substrates. The polypeptide is DNA-directed RNA polymerase subunit beta' (Azoarcus sp. (strain BH72)).